We begin with the raw amino-acid sequence, 310 residues long: 4-hydroxyproline epimerase (310 aa).

The Proton acceptor role is filled by C88. Residues 89–90 (GH), H208, and D232 contribute to the substrate site. C236 acts as the Proton donor in catalysis. Position 237-238 (237-238 (GT)) interacts with substrate.

This sequence belongs to the proline racemase family. As to quaternary structure, homodimer.

It catalyses the reaction trans-4-hydroxy-L-proline = cis-4-hydroxy-D-proline. Functionally, allows intracellular utilization of 4-hydroxyproline, one of the major constituents of host collagen, by converting 4-hydroxy-L-proline to 4-hydroxy-D-proline, which can be further metabolized by intracellular 4-hydroxy-D-proline oxidases. The sequence is that of 4-hydroxyproline epimerase from Burkholderia cenocepacia (strain HI2424).